The chain runs to 494 residues: MTTVRTRIAPSPTGDPHVGTAYIALFNLCFARQHGGQFILRIEDTDQLRSTRESEQQIFDALRWLGIEWDEGPDVGGPHGPYRQSERGHIYKKYSDELVEQGHAFTCFCTPERLDAVRAEQMARKETPRYDGHCMHLPKDEVQRRVAAGESHVTRMKVPTEGVCVVPDMLRGNVEIPWDRMDMQVLMKADGLPTYFLANVVDDHLMGITHVLRGEEWLPSAPKLIKLYEYFGWEQPQLCYMPLLRNPDKSKLSKRKNPTSITFYERMGYLPQALLNYLGRMGWSMPDEREKFTLAEMIEHFDLSRVSLGGPIFDLEKLSWLNGQWIREQSVEEFAREVQKWALNPEYLMKIAPHVQGRVENFSQIAPLAGFFFSGGVPLDASLFEHKKLDPTQVRQVLQLVLWKLESLRQWEKERITGCIQAVAEHLQLKLRDVMPLMFPAITGHASSVSVLDAMEILGADLSRYRLRQALELLGGASKKETKEWEKIRDAIPG.

The 'HIGH' region signature appears at 10 to 20; the sequence is PSPTGDPHVGT. Residues C107, C109, C134, and H136 each contribute to the Zn(2+) site. The 'KMSKS' region signature appears at 251–255; that stretch reads KLSKR. K254 lines the ATP pocket.

This sequence belongs to the class-I aminoacyl-tRNA synthetase family. Glutamate--tRNA ligase type 1 subfamily. Monomer. The cofactor is Zn(2+).

It is found in the cytoplasm. It catalyses the reaction tRNA(Glu) + L-glutamate + ATP = L-glutamyl-tRNA(Glu) + AMP + diphosphate. In terms of biological role, catalyzes the attachment of glutamate to tRNA(Glu) in a two-step reaction: glutamate is first activated by ATP to form Glu-AMP and then transferred to the acceptor end of tRNA(Glu). The sequence is that of Glutamate--tRNA ligase from Pseudomonas paraeruginosa (strain DSM 24068 / PA7) (Pseudomonas aeruginosa (strain PA7)).